The sequence spans 216 residues: Peptide methionine sulfoxide reductase MsrA (216 aa).

Cys-54 is an active-site residue.

This sequence belongs to the MsrA Met sulfoxide reductase family.

The enzyme catalyses L-methionyl-[protein] + [thioredoxin]-disulfide + H2O = L-methionyl-(S)-S-oxide-[protein] + [thioredoxin]-dithiol. It catalyses the reaction [thioredoxin]-disulfide + L-methionine + H2O = L-methionine (S)-S-oxide + [thioredoxin]-dithiol. Functionally, has an important function as a repair enzyme for proteins that have been inactivated by oxidation. Catalyzes the reversible oxidation-reduction of methionine sulfoxide in proteins to methionine. The sequence is that of Peptide methionine sulfoxide reductase MsrA from Xanthomonas euvesicatoria pv. vesicatoria (strain 85-10) (Xanthomonas campestris pv. vesicatoria).